A 647-amino-acid chain; its full sequence is Threonine--tRNA ligase (647 aa).

Residues 1–61 enclose the TGS domain; sequence MIKITFPDGA…EEDGSIEIVT (61 aa). Residues 240–538 form a catalytic region; the sequence is DHRKLGKELD…LIETYKGAFP (299 aa). Cys-334, His-385, and His-515 together coordinate Zn(2+).

The protein belongs to the class-II aminoacyl-tRNA synthetase family. Homodimer. Requires Zn(2+) as cofactor.

It localises to the cytoplasm. It carries out the reaction tRNA(Thr) + L-threonine + ATP = L-threonyl-tRNA(Thr) + AMP + diphosphate + H(+). Catalyzes the attachment of threonine to tRNA(Thr) in a two-step reaction: L-threonine is first activated by ATP to form Thr-AMP and then transferred to the acceptor end of tRNA(Thr). Also edits incorrectly charged L-seryl-tRNA(Thr). The polypeptide is Threonine--tRNA ligase (Streptococcus pyogenes serotype M6 (strain ATCC BAA-946 / MGAS10394)).